A 530-amino-acid chain; its full sequence is Probable flavin-containing monooxygenase 1 (530 aa).

FAD contacts are provided by residues 17-21 (GAGVS), Glu-38, 46-47 (VW), and 58-59 (QS). Position 219–222 (219–222 (SAID)) interacts with NADP(+).

This sequence belongs to the FMO family. The cofactor is FAD.

Its function is as follows. Required for the establishment of systemic acquired resistance (SAR). Not involved in local defense mechanisms. Confers a salicylic acid-dependent (SA) resistance to virulent pathogens such as P.syringae pv tomato and H.parasitica. The chain is Probable flavin-containing monooxygenase 1 (FMO1) from Arabidopsis thaliana (Mouse-ear cress).